Consider the following 24-residue polypeptide: RKGWFKAMKSIAKFIAKEKLKEHL.

The protein belongs to the cationic peptide 04 (cupiennin) family. 05 subfamily. As to quaternary structure, monomer in solution. Small size oligomers on the lipid membranes.

Its subcellular location is the secreted. It is found in the target cell membrane. Functionally, antimicrobial peptide that inhibits many reference strains of bacteria and fungi. Is potent against Candida species and multidrug-resistant Acinetobacter baumannii (MDRAB). Is probably localized in the cytoplasm after being transported through the cell wall and membrane. Is able to interact with cell membranes and enter into cell plasma to activate the mitochondrial death pathway to sensitize cancer cells for apoptosis, as well as up-regulates p27 to inhibit cell proliferation. It shows very low effect on normal cells, such as erythrocytes, Hek293t cells. It also potently inhibits tumor cell growth in vitro, and suppresses various tumor growth in vivo when tested in human cancer xenograft models. It interacts with the cell membrane and is then internalized into the cytoplasm of cancer cells to initiate the programmable cell death. In addition, this peptide has the therapeutic effects of anti-hypertension by endothelium-dependent vasodilatation via the NO/sGC/cGMP signaling pathway. In vivo, this peptide also shows a significant ability to inhibit T.gondii invasion and proliferation, making it a potential alternative agent for the treatment of toxoplasmosis. This Lycosa singoriensis (Wolf spider) protein is Lycosin-I.